Consider the following 391-residue polypeptide: Uroporphyrinogen decarboxylase, chloroplastic (391 aa).

Substrate is bound by residues 71-75 (RQAGR), phenylalanine 90, serine 120, aspartate 121, tyrosine 198, serine 253, and histidine 368.

It belongs to the uroporphyrinogen decarboxylase family. In terms of assembly, homodimer.

It is found in the plastid. It localises to the chloroplast. It catalyses the reaction uroporphyrinogen III + 4 H(+) = coproporphyrinogen III + 4 CO2. Its pathway is porphyrin-containing compound metabolism; protoporphyrin-IX biosynthesis; coproporphyrinogen-III from 5-aminolevulinate: step 4/4. In terms of biological role, catalyzes the decarboxylation of four acetate groups of uroporphyrinogen-III to yield coproporphyrinogen-III. This is Uroporphyrinogen decarboxylase, chloroplastic (DCUP) from Nicotiana tabacum (Common tobacco).